Reading from the N-terminus, the 985-residue chain is UPF0182 protein cgR_0895 (985 aa).

7 helical membrane passes run 19–39 (VTWIFAIIALIILIAPMSVGF), 63–83 (IVLFVIFALIAGFVTWLAGYF), 115–135 (VMVLIPIFVALLAGLIGQRSW), 176–196 (SMMLIVAFLIALVGHYLMGGI), 215–235 (TQLAVTAGLWMLVKVAGYWLD), 262–282 (KIILLVIALFVAIAFFSAIFL), and 290–310 (LAVVLMLLSSVIIGAAWPLML). Positions 906 to 944 (AQDIEEVDGTTTTPSTDETDTDTDQPATETPTAPVSEAE) are disordered. Residues 929–939 (DQPATETPTAP) show a composition bias toward low complexity.

Belongs to the UPF0182 family.

It is found in the cell membrane. This chain is UPF0182 protein cgR_0895, found in Corynebacterium glutamicum (strain R).